Consider the following 332-residue polypeptide: L-lactate dehydrogenase A chain (332 aa).

NAD(+)-binding positions include 29 to 57 (GMVG…MEDK) and R99. Residues R106, N138, and R169 each coordinate substrate. Residue N138 coordinates NAD(+). H193 acts as the Proton acceptor in catalysis. Residue T248 coordinates substrate.

Belongs to the LDH/MDH superfamily. LDH family. Homotetramer.

It localises to the cytoplasm. The enzyme catalyses (S)-lactate + NAD(+) = pyruvate + NADH + H(+). It participates in fermentation; pyruvate fermentation to lactate; (S)-lactate from pyruvate: step 1/1. Its function is as follows. Interconverts simultaneously and stereospecifically pyruvate and lactate with concomitant interconversion of NADH and NAD(+). In Sphyraena idiastes (Pelican barracuda), this protein is L-lactate dehydrogenase A chain (ldha).